A 207-amino-acid polypeptide reads, in one-letter code: MKNIEIEDDLYKYILANIEAFGETPSQILRRLLSLPNASPDNATPITSSVTPSAPRQEAVNDESSVFEAVTPKVLDRANISLPEPLAHGVNALFDSEVFKTEAVVTNKFMMLLATMYYENKNAFEDAADKTKGRTRDYLGQNLNALLAADSEEEQNFFKASKPRNIPHTPFWVITNANTGRKRIIITQMMASMGYPHYLIERIKEEI.

The span at 43 to 54 (ATPITSSVTPSA) shows a compositional bias: polar residues. The disordered stretch occupies residues 43–63 (ATPITSSVTPSAPRQEAVNDE).

This sequence belongs to the SeqA family. As to quaternary structure, homodimer. Polymerizes to form helical filaments.

The protein localises to the cytoplasm. In terms of biological role, negative regulator of replication initiation, which contributes to regulation of DNA replication and ensures that replication initiation occurs exactly once per chromosome per cell cycle. Binds to pairs of hemimethylated GATC sequences in the oriC region, thus preventing assembly of replication proteins and re-initiation at newly replicated origins. Repression is relieved when the region becomes fully methylated. The protein is Negative modulator of initiation of replication of Psychromonas ingrahamii (strain DSM 17664 / CCUG 51855 / 37).